Here is a 241-residue protein sequence, read N- to C-terminus: MPLGLIGEKVGMTRVLLKDGTAIPVTVIKFPVNYVVQVKSQNTKDGYNALQIGAYEAKEKHLTKPLIGHFKKHGVPLLRRLWEFRVDNPEEFQSGQQLKVEDVFKPGDLVDVWGISKGRGFAGAMKRWDFAGFPKSHGHRYHRAVGAIGQRTDPGRVWKGKRMPGHYGAKPVRVQGLFVVDVLPEENAILVKGSVPGHNKGIVVVEQSTIAYRKSQKLKQKRYQFIIENLAKEESQEVAES.

This sequence belongs to the universal ribosomal protein uL3 family. In terms of assembly, part of the 50S ribosomal subunit. Forms a cluster with proteins L14 and L19.

Functionally, one of the primary rRNA binding proteins, it binds directly near the 3'-end of the 23S rRNA, where it nucleates assembly of the 50S subunit. This Aquifex aeolicus (strain VF5) protein is Large ribosomal subunit protein uL3.